The chain runs to 578 residues: SWR1 complex bromodomain subunit bdf1 (578 aa).

A compositionally biased stretch (basic and acidic residues) spans 1–18 (MSSESRENEVKAETKDEI). Disordered regions lie at residues 1–89 (MSSE…PPPQ), 192–254 (DAEQ…RKNN), and 504–578 (ADSS…SESA). Residues 22–36 (GSPQLNGDNNIQSSD) show a composition bias toward polar residues. Basic and acidic residues-rich tracts occupy residues 37–52 (GHNDENEESLSRKRDS) and 60–77 (LKQEEKESMPKKEPEPTV). The Bromo 1 domain maps to 84-190 (GMPPPQQKYC…EVFERQLKQL (107 aa)). A compositionally biased stretch (low complexity) spans 219 to 242 (NSSVSSTSASVAASTAPKAASPAV). 3 positions are modified to phosphoserine: Ser221, Ser223, and Ser224. Thr225 bears the Phosphothreonine mark. 2 positions are modified to phosphoserine: Ser226 and Ser239. Positions 251–360 (RKNNSQMRFC…NVFKEKWEAR (110 aa)) constitute a Bromo 2 domain. Residues 430–510 (RRDLTKEYGP…KPDADSSEPA (81 aa)) form the NET domain. A Phosphoserine modification is found at Ser511. Positions 526-537 (VLSETEQAEKIR) are enriched in basic and acidic residues. Polar residues predominate over residues 550–563 (TSPTSPESNNAANV). Residues 566 to 578 (SESDNESESSESA) show a composition bias toward acidic residues.

Belongs to the BET family. Component of the SWR1 chromatin-remodeling complex.

The protein resides in the nucleus. Component of the SWR1 complex which mediates the ATP-dependent exchange of histone H2A for the H2A variant HZT1 leading to transcriptional regulation of selected genes by chromatin remodeling. The polypeptide is SWR1 complex bromodomain subunit bdf1 (bdf1) (Schizosaccharomyces pombe (strain 972 / ATCC 24843) (Fission yeast)).